Reading from the N-terminus, the 292-residue chain is Undecaprenyl-diphosphatase (292 aa).

A run of 7 helical transmembrane segments spans residues 1-21, 46-66, 90-110, 114-134, 192-212, 225-245, and 253-273; these read MSLV…FLPV, FVTI…RADI, LGWY…LLEH, ALGN…LLAA, FLLS…STVP, VVGT…LLAW, and VFVV…LSGV.

Belongs to the UppP family.

Its subcellular location is the cell inner membrane. It catalyses the reaction di-trans,octa-cis-undecaprenyl diphosphate + H2O = di-trans,octa-cis-undecaprenyl phosphate + phosphate + H(+). Its function is as follows. Catalyzes the dephosphorylation of undecaprenyl diphosphate (UPP). Confers resistance to bacitracin. This is Undecaprenyl-diphosphatase from Anaeromyxobacter sp. (strain K).